A 346-amino-acid chain; its full sequence is tRNA N6-adenosine threonylcarbamoyltransferase (346 aa).

Residues His111 and His115 each coordinate Fe cation. Residues 134-138, Asp167, Gly180, Asp184, and Asn279 contribute to the substrate site; that span reads LVSGG. Asp307 lines the Fe cation pocket.

This sequence belongs to the KAE1 / TsaD family. The cofactor is Fe(2+).

It localises to the cytoplasm. It catalyses the reaction L-threonylcarbamoyladenylate + adenosine(37) in tRNA = N(6)-L-threonylcarbamoyladenosine(37) in tRNA + AMP + H(+). In terms of biological role, required for the formation of a threonylcarbamoyl group on adenosine at position 37 (t(6)A37) in tRNAs that read codons beginning with adenine. Is involved in the transfer of the threonylcarbamoyl moiety of threonylcarbamoyl-AMP (TC-AMP) to the N6 group of A37, together with TsaE and TsaB. TsaD likely plays a direct catalytic role in this reaction. The polypeptide is tRNA N6-adenosine threonylcarbamoyltransferase (Gloeothece citriformis (strain PCC 7424) (Cyanothece sp. (strain PCC 7424))).